Here is a 262-residue protein sequence, read N- to C-terminus: MSASCAVPRLTRFAVFAVAGATALSLSACGSSNKSSSTSTSTSTSTSTVTSAAPSSTPNAEAKVSGLIASVAGNSIQVTKEDNATAAVNFTSATKITEAVPAGLPDVTQGSCLIVKPTEGSAPGQPVTAAKVKISESVNGTCPKPHESTPGGASSTPPSGSPSPAPAKPAWVRGSVASVSGDTINLTGTDASGNTTQTTVTVDDKTKYTKQTTANTEAIAPGKCLSARGTTDSGGALQATSIKLRQAVDGKCGKPKQPGQGG.

The first 28 residues, 1–28 (MSASCAVPRLTRFAVFAVAGATALSLSA), serve as a signal peptide directing secretion. Composition is skewed to low complexity over residues 28–57 (ACGSSNKSSSTSTSTSTSTSTVTSAAPSST) and 148–158 (STPGGASSTPP). Disordered regions lie at residues 28 to 60 (ACGSSNKSSSTSTSTSTSTSTVTSAAPSSTPNA) and 138 to 171 (VNGTCPKPHESTPGGASSTPPSGSPSPAPAKPAW). The N-palmitoyl cysteine moiety is linked to residue Cys-29. Residue Cys-29 is the site of S-diacylglycerol cysteine attachment.

Its subcellular location is the cell membrane. The protein is 27 kDa lipoprotein antigen (Mi43) of Mycobacterium intracellulare.